The chain runs to 554 residues: D-3-phosphoglycerate dehydrogenase (554 aa).

Residues 177-178 (KI), D197, 256-258 (CSR), and D282 each bind NAD(+). Residue R258 is part of the active site. The active site involves E287. The active-site Proton donor is the H305. NAD(+) is bound at residue 305-308 (HLGA). The ACT domain maps to 482–554 (MLFTLHRDMP…GIRDAYTVKL (73 aa)).

This sequence belongs to the D-isomer specific 2-hydroxyacid dehydrogenase family.

The enzyme catalyses (2R)-3-phosphoglycerate + NAD(+) = 3-phosphooxypyruvate + NADH + H(+). The catalysed reaction is (R)-2-hydroxyglutarate + NAD(+) = 2-oxoglutarate + NADH + H(+). It functions in the pathway amino-acid biosynthesis; L-serine biosynthesis; L-serine from 3-phospho-D-glycerate: step 1/3. In terms of biological role, catalyzes the reversible oxidation of 3-phospho-D-glycerate to 3-phosphonooxypyruvate, the first step of the phosphorylated L-serine biosynthesis pathway. Also catalyzes the reversible oxidation of 2-hydroxyglutarate to 2-oxoglutarate. In Synechocystis sp. (strain ATCC 27184 / PCC 6803 / Kazusa), this protein is D-3-phosphoglycerate dehydrogenase (serA).